Consider the following 271-residue polypeptide: Urease accessory protein UreD (271 aa).

This sequence belongs to the UreD family. UreD, UreF and UreG form a complex that acts as a GTP-hydrolysis-dependent molecular chaperone, activating the urease apoprotein by helping to assemble the nickel containing metallocenter of UreC. The UreE protein probably delivers the nickel.

It localises to the cytoplasm. Functionally, required for maturation of urease via the functional incorporation of the urease nickel metallocenter. This Halalkalibacterium halodurans (strain ATCC BAA-125 / DSM 18197 / FERM 7344 / JCM 9153 / C-125) (Bacillus halodurans) protein is Urease accessory protein UreD.